Consider the following 437-residue polypeptide: MTNYFDKIEKVKYEGADSTNPFAYKHYNANEVILGKTMAEHLRLAVCYWHTFCWNGNDMFGVGSLDRSWQKMSDPLAAAKQKADIAFEFLTKLGVPYYCFHDVDIAPEGNSYQEYVRNFNTIVDILEQKQAESGVKLLWGTANCFSNPRYMSGAATNPNPEIFTRAAAQVFNAMNATKRLGGENYVLWGGREGYETLLNTDLRREREQIGRFMQMVVEHKHKIGFSGTLLIEPKPQEPTKHQYDYDVATVYGFLKQFGLEKEIKVNIEANHATLAGHTFQHEIATAAALDILGSIDANRGDPQLGWDTDQFPNSVEENTLAIYEILKAGGLTTGGFNFDAKIRRQSINPYDLFHGHIGAIDVLALSLKRAAKMVEDHTLQNIVDQRYAGWNGELGQQILAGKSSLEALAQAAQNLDPNPVSGQQEYIENLVNGYIYR.

Catalysis depends on residues His101 and Asp104. Residues Glu232, Glu268, His271, Asp296, Asp307, Asp309, and Asp339 each contribute to the Mg(2+) site.

It belongs to the xylose isomerase family. In terms of assembly, homotetramer. It depends on Mg(2+) as a cofactor.

It localises to the cytoplasm. It catalyses the reaction alpha-D-xylose = alpha-D-xylulofuranose. This chain is Xylose isomerase, found in Mannheimia succiniciproducens (strain KCTC 0769BP / MBEL55E).